A 409-amino-acid polypeptide reads, in one-letter code: Failed axon connections homolog (409 aa).

A helical membrane pass occupies residues 68-88; that stretch reads YLTGGALLAAAAYLLHELLVI. Positions 372 to 393 are disordered; that stretch reads DEGAENSFSRTPDTDFTGHSLF.

This sequence belongs to the FAX family.

Its subcellular location is the membrane. May play a role in axonal development. This chain is Failed axon connections homolog (Faxc), found in Mus musculus (Mouse).